We begin with the raw amino-acid sequence, 49 residues long: Cytochrome b559 subunit beta (49 aa).

A helical transmembrane segment spans residues 24-40 (WLAVHVLGVPTVFFLGA). Heme is bound at residue H28.

Belongs to the PsbE/PsbF family. As to quaternary structure, heterodimer of an alpha subunit and a beta subunit. PSII is composed of 1 copy each of membrane proteins PsbA, PsbB, PsbC, PsbD, PsbE, PsbF, PsbH, PsbI, PsbJ, PsbK, PsbL, PsbM, PsbT, PsbX, PsbY, Psb30/Ycf12, peripheral proteins PsbO, CyanoQ (PsbQ), PsbU, PsbV and a large number of cofactors. It forms dimeric complexes. The cofactor is heme b.

The protein localises to the cellular thylakoid membrane. Its function is as follows. This b-type cytochrome is tightly associated with the reaction center of photosystem II (PSII). PSII is a light-driven water:plastoquinone oxidoreductase that uses light energy to abstract electrons from H(2)O, generating O(2) and a proton gradient subsequently used for ATP formation. It consists of a core antenna complex that captures photons, and an electron transfer chain that converts photonic excitation into a charge separation. The protein is Cytochrome b559 subunit beta of Prochlorococcus marinus (strain MIT 9303).